Here is a 503-residue protein sequence, read N- to C-terminus: Maturase K (503 aa).

This sequence belongs to the intron maturase 2 family. MatK subfamily.

It is found in the plastid. The protein localises to the chloroplast. Functionally, usually encoded in the trnK tRNA gene intron. Probably assists in splicing its own and other chloroplast group II introns. The sequence is that of Maturase K from Kunzea baxteri (Scarlet kunzea).